A 341-amino-acid polypeptide reads, in one-letter code: DNA-directed RNA polymerase subunit alpha (341 aa).

An alpha N-terminal domain (alpha-NTD) region spans residues 1–233 (MIRDEIPISA…NLFIPFLHAE (233 aa)). The tract at residues 265–341 (TKGVTFKHIF…NLPKNKLHFH (77 aa)) is alpha C-terminal domain (alpha-CTD).

This sequence belongs to the RNA polymerase alpha chain family. As to quaternary structure, in plastids the minimal PEP RNA polymerase catalytic core is composed of four subunits: alpha, beta, beta', and beta''. When a (nuclear-encoded) sigma factor is associated with the core the holoenzyme is formed, which can initiate transcription.

It localises to the plastid. The protein localises to the chloroplast. It catalyses the reaction RNA(n) + a ribonucleoside 5'-triphosphate = RNA(n+1) + diphosphate. In terms of biological role, DNA-dependent RNA polymerase catalyzes the transcription of DNA into RNA using the four ribonucleoside triphosphates as substrates. This Takakia lepidozioides (Moss) protein is DNA-directed RNA polymerase subunit alpha.